Reading from the N-terminus, the 1145-residue chain is Nucleolar protein 6 (1145 aa).

The segment at 1 to 46 (MQKKRNRAGPPQQEAASDDGEMSDSSDKMEVAQGKGKSAVKRAPDA) is disordered.

This sequence belongs to the NRAP family. In terms of assembly, part of the small subunit (SSU) processome, composed of more than 70 proteins and the RNA chaperone small nucleolar RNA (snoRNA) U3.

The protein resides in the nucleus. The protein localises to the nucleolus. It localises to the chromosome. Its function is as follows. Part of the small subunit (SSU) processome, first precursor of the small eukaryotic ribosomal subunit. During the assembly of the SSU processome in the nucleolus, many ribosome biogenesis factors, an RNA chaperone and ribosomal proteins associate with the nascent pre-rRNA and work in concert to generate RNA folding, modifications, rearrangements and cleavage as well as targeted degradation of pre-ribosomal RNA by the RNA exosome. This Xenopus tropicalis (Western clawed frog) protein is Nucleolar protein 6 (nol6).